A 220-amino-acid polypeptide reads, in one-letter code: Deoxyribose-phosphate aldolase (220 aa).

Aspartate 89 functions as the Proton donor/acceptor in the catalytic mechanism. Lysine 151 serves as the catalytic Schiff-base intermediate with acetaldehyde. Catalysis depends on lysine 180, which acts as the Proton donor/acceptor.

It belongs to the DeoC/FbaB aldolase family. DeoC type 1 subfamily.

Its subcellular location is the cytoplasm. It carries out the reaction 2-deoxy-D-ribose 5-phosphate = D-glyceraldehyde 3-phosphate + acetaldehyde. It participates in carbohydrate degradation; 2-deoxy-D-ribose 1-phosphate degradation; D-glyceraldehyde 3-phosphate and acetaldehyde from 2-deoxy-alpha-D-ribose 1-phosphate: step 2/2. Its function is as follows. Catalyzes a reversible aldol reaction between acetaldehyde and D-glyceraldehyde 3-phosphate to generate 2-deoxy-D-ribose 5-phosphate. This Streptococcus pneumoniae serotype 19F (strain G54) protein is Deoxyribose-phosphate aldolase.